Consider the following 133-residue polypeptide: Phosphoribosyl-AMP cyclohydrolase (133 aa).

Mg(2+) is bound at residue Asp82. Cys83 is a Zn(2+) binding site. The Mg(2+) site is built by Asp84 and Asp86. The Zn(2+) site is built by Cys99 and Cys106.

It belongs to the PRA-CH family. In terms of assembly, homodimer. The cofactor is Mg(2+). Zn(2+) is required as a cofactor.

It localises to the cytoplasm. The catalysed reaction is 1-(5-phospho-beta-D-ribosyl)-5'-AMP + H2O = 1-(5-phospho-beta-D-ribosyl)-5-[(5-phospho-beta-D-ribosylamino)methylideneamino]imidazole-4-carboxamide. The protein operates within amino-acid biosynthesis; L-histidine biosynthesis; L-histidine from 5-phospho-alpha-D-ribose 1-diphosphate: step 3/9. Catalyzes the hydrolysis of the adenine ring of phosphoribosyl-AMP. In Rhodospirillum centenum (strain ATCC 51521 / SW), this protein is Phosphoribosyl-AMP cyclohydrolase.